A 619-amino-acid polypeptide reads, in one-letter code: Chaperone protein HscA homolog (619 aa).

The protein belongs to the heat shock protein 70 family.

In terms of biological role, chaperone involved in the maturation of iron-sulfur cluster-containing proteins. Has a low intrinsic ATPase activity which is markedly stimulated by HscB. In Chromobacterium violaceum (strain ATCC 12472 / DSM 30191 / JCM 1249 / CCUG 213 / NBRC 12614 / NCIMB 9131 / NCTC 9757 / MK), this protein is Chaperone protein HscA homolog.